The chain runs to 456 residues: Bifunctional protein GlmU (456 aa).

A pyrophosphorylase region spans residues 1–229 (MTKKALSAVI…VMEVEGANNR (229 aa)). UDP-N-acetyl-alpha-D-glucosamine contacts are provided by residues 11–14 (LAAG), Lys-25, Gln-76, 81–82 (GT), 103–105 (YGD), Gly-140, Glu-154, Asn-169, and Asn-227. Mg(2+) is bound at residue Asp-105. Asn-227 is a binding site for Mg(2+). The interval 230–250 (LQLAALERYFQNKQASKLLLE) is linker. Positions 251 to 456 (GVMIYDPARF…QGWQRPIKKK (206 aa)) are N-acetyltransferase. Residues Arg-333 and Lys-351 each contribute to the UDP-N-acetyl-alpha-D-glucosamine site. His-363 acts as the Proton acceptor in catalysis. UDP-N-acetyl-alpha-D-glucosamine contacts are provided by Tyr-366 and Asn-377. Acetyl-CoA contacts are provided by residues Ala-380, 386–387 (NY), Ser-405, Ala-423, and Arg-440.

It in the N-terminal section; belongs to the N-acetylglucosamine-1-phosphate uridyltransferase family. In the C-terminal section; belongs to the transferase hexapeptide repeat family. In terms of assembly, homotrimer. Requires Mg(2+) as cofactor.

It localises to the cytoplasm. The catalysed reaction is alpha-D-glucosamine 1-phosphate + acetyl-CoA = N-acetyl-alpha-D-glucosamine 1-phosphate + CoA + H(+). It carries out the reaction N-acetyl-alpha-D-glucosamine 1-phosphate + UTP + H(+) = UDP-N-acetyl-alpha-D-glucosamine + diphosphate. It functions in the pathway nucleotide-sugar biosynthesis; UDP-N-acetyl-alpha-D-glucosamine biosynthesis; N-acetyl-alpha-D-glucosamine 1-phosphate from alpha-D-glucosamine 6-phosphate (route II): step 2/2. The protein operates within nucleotide-sugar biosynthesis; UDP-N-acetyl-alpha-D-glucosamine biosynthesis; UDP-N-acetyl-alpha-D-glucosamine from N-acetyl-alpha-D-glucosamine 1-phosphate: step 1/1. Its pathway is bacterial outer membrane biogenesis; LPS lipid A biosynthesis. Catalyzes the last two sequential reactions in the de novo biosynthetic pathway for UDP-N-acetylglucosamine (UDP-GlcNAc). The C-terminal domain catalyzes the transfer of acetyl group from acetyl coenzyme A to glucosamine-1-phosphate (GlcN-1-P) to produce N-acetylglucosamine-1-phosphate (GlcNAc-1-P), which is converted into UDP-GlcNAc by the transfer of uridine 5-monophosphate (from uridine 5-triphosphate), a reaction catalyzed by the N-terminal domain. In Haemophilus influenzae (strain ATCC 51907 / DSM 11121 / KW20 / Rd), this protein is Bifunctional protein GlmU.